The sequence spans 513 residues: E3 ubiquitin-protein ligase RNF25 (513 aa).

The RWD domain occupies 9–117; sequence SEIEVLQSIY…ERAKEILTDS (109 aa). 8 residues coordinate Zn(2+): C124, C127, C142, H144, H147, C150, C187, and C190. The segment at 124–191 adopts an RING-type; atypical zinc-finger fold; that stretch reads CVICLYDFKE…ELAVVCPVCR (68 aa). The interval 261 to 513 is disordered; the sequence is NLSDTPGMTD…EKEFRKEGVL (253 aa). Residues 271–297 are compositionally biased toward low complexity; it reads SSGAESSQSLPSSSPDSTSTTQTSQNQ. Composition is skewed to polar residues over residues 345-397 and 406-423; these read SDKI…QDML and EVSQ…QTIL. The segment covering 426–440 has biased composition (basic and acidic residues); it reads GHPEREHVGRGDKRG. The segment covering 482–498 has biased composition (gly residues); it reads AGRGHRGGGAYRGGGRG. Basic and acidic residues predominate over residues 501 to 513; it reads QRVEKEFRKEGVL.

It belongs to the RNF25 family.

The protein resides in the cytoplasm. The enzyme catalyses S-ubiquitinyl-[E2 ubiquitin-conjugating enzyme]-L-cysteine + [acceptor protein]-L-lysine = [E2 ubiquitin-conjugating enzyme]-L-cysteine + N(6)-ubiquitinyl-[acceptor protein]-L-lysine.. Its pathway is protein modification; protein ubiquitination. E3 ubiquitin-protein ligase that plays a key role in the RNF14-RNF25 translation quality control pathway, a pathway that takes place when a ribosome has stalled during translation, and which promotes ubiquitination and degradation of translation factors on stalled ribosomes. May also acts as a positive regulator of the Wnt signaling. The polypeptide is E3 ubiquitin-protein ligase RNF25 (Danio rerio (Zebrafish)).